Here is a 122-residue protein sequence, read N- to C-terminus: UPF0102 protein CTC_01256 (122 aa).

The protein belongs to the UPF0102 family.

This is UPF0102 protein CTC_01256 from Clostridium tetani (strain Massachusetts / E88).